Reading from the N-terminus, the 598-residue chain is IQ calmodulin-binding motif-containing protein 1 (598 aa).

The tract at residues Met-1–Val-157 is interaction with BBS1, BBS8 and BBS9. The segment at Gln-287–Pro-598 is interaction with CEP290, BBS1, BBS2, BBS4, BBS5, BBS7, BBS8 and BBS9. 4 IQ domains span residues Leu-294–Leu-317, Pro-318–Glu-338, Glu-387–Glu-416, and Tyr-417–Lys-437. A coiled-coil region spans residues Leu-336–Ile-373. The interval Ala-530 to Pro-598 is interaction with BBS1, BBS2, BBS4, BBS7, BBS8 and BBS9. Ser-572 is subject to Phosphoserine.

Interacts with CEP290/NPHP6; IQCB1/NPHP5 and CEP290 are proposed to form a functional NPHP5-6 module/NPHP6; localized to the centrosome. Interacts with calmodulin, ATXN10. Interacts with NPHP1, INVS, NPHP4 and RPGRIP1L; these interactions likely require additional interactors. Associates with the BBSome complex; interacts with BBS1, BBS2, BBS4, BBS5, BBS7, BBS8 and BBS9. As to expression, ubiquitously expressed in fetal and adult tissues. Localized to the outer segments and connecting cilia of photoreceptor cells. Up-regulated in a number of primary colorectal and gastric tumors.

The protein localises to the cytoplasm. It is found in the cytoskeleton. It localises to the microtubule organizing center. Its subcellular location is the centrosome. The protein resides in the centriole. Its function is as follows. Involved in ciliogenesis. The function in an early step in cilia formation depends on its association with CEP290/NPHP6. Involved in regulation of the BBSome complex integrity, specifically for presence of BBS2 and BBS5 in the complex, and in ciliary targeting of selected BBSome cargos. May play a role in controlling entry of the BBSome complex to cilia possibly implicating CEP290/NPHP6. The protein is IQ calmodulin-binding motif-containing protein 1 (IQCB1) of Homo sapiens (Human).